Here is a 106-residue protein sequence, read N- to C-terminus: Large ribosomal subunit protein eL42 (106 aa).

This sequence belongs to the eukaryotic ribosomal protein eL42 family.

The protein is Large ribosomal subunit protein eL42 (RPL44) of Meyerozyma guilliermondii (strain ATCC 6260 / CBS 566 / DSM 6381 / JCM 1539 / NBRC 10279 / NRRL Y-324) (Yeast).